A 59-amino-acid polypeptide reads, in one-letter code: Large ribosomal subunit protein bL32 (59 aa).

Belongs to the bacterial ribosomal protein bL32 family.

The protein is Large ribosomal subunit protein bL32 of Rhizorhabdus wittichii (strain DSM 6014 / CCUG 31198 / JCM 15750 / NBRC 105917 / EY 4224 / RW1) (Sphingomonas wittichii).